The sequence spans 324 residues: Arginase (324 aa).

Residues His-115, Asp-143, His-145, and Asp-147 each contribute to the Mn(2+) site. Residues 145 to 149 (HADIN), 156 to 158 (SGN), and Asp-202 each bind substrate. Asp-249 and Asp-251 together coordinate Mn(2+). Thr-263 and Glu-294 together coordinate substrate.

Belongs to the arginase family. In terms of assembly, homotrimer. The cofactor is Mn(2+).

The catalysed reaction is L-arginine + H2O = urea + L-ornithine. Its pathway is nitrogen metabolism; urea cycle; L-ornithine and urea from L-arginine: step 1/1. The protein is Arginase (agaA) of Emericella nidulans (strain FGSC A4 / ATCC 38163 / CBS 112.46 / NRRL 194 / M139) (Aspergillus nidulans).